The chain runs to 902 residues: Cytosolic 10-formyltetrahydrofolate dehydrogenase (902 aa).

The tract at residues 1 to 310 is hydrolase domain; that stretch reads MKIAVIGQSL…LASNFFKGAA (310 aa). At Ser-9 the chain carries Phosphoserine. N6-succinyllysine is present on Lys-38. A (6R)-10-formyltetrahydrofolate-binding site is contributed by 88–90; that stretch reads QFI. The Proton donor role is filled by His-106. Asp-142 contributes to the (6R)-10-formyltetrahydrofolate binding site. The region spanning 318 to 395 is the Carrier domain; that stretch reads EAELVTAEAV…DFIQLLVRKL (78 aa). At Ser-354 the chain carries O-(pantetheine 4'-phosphoryl)serine. The segment at 417 to 902 is aldehyde dehydrogenase domain; sequence TIRIPHQLFI…LRVKTVTFEY (486 aa). NADP(+)-binding positions include 571-573 and 597-600; these read IPW and KPAQ. Phosphoserine is present on residues Ser-629 and Ser-631. NADP(+)-binding positions include 630–635 and 650–651; these read GSLVGQ and GS. The residue at position 660 (Lys-660) is an N6-succinyllysine. The active-site Proton acceptor is Glu-673. 673–674 lines the NADP(+) pocket; it reads EL. Residue Cys-707 is the Proton donor of the active site. Position 757 (Lys-757) interacts with NADP(+). Lys-767 carries the post-translational modification N6-succinyllysine. 804 to 806 serves as a coordination point for NADP(+); sequence ESF. Phosphoserine is present on Ser-825. Position 882 is an N6-acetyllysine (Lys-882).

It in the N-terminal section; belongs to the GART family. In the C-terminal section; belongs to the aldehyde dehydrogenase family. ALDH1L subfamily. As to quaternary structure, homotetramer. In terms of processing, phosphopantetheinylation at Ser-354 by AASDHPPT is required for the formyltetrahydrofolate dehydrogenase activity.

It is found in the cytoplasm. The protein localises to the cytosol. The catalysed reaction is (6R)-10-formyltetrahydrofolate + NADP(+) + H2O = (6S)-5,6,7,8-tetrahydrofolate + CO2 + NADPH + H(+). In terms of biological role, cytosolic 10-formyltetrahydrofolate dehydrogenase that catalyzes the NADP(+)-dependent conversion of 10-formyltetrahydrofolate to tetrahydrofolate and carbon dioxide. May also have an NADP(+)-dependent aldehyde dehydrogenase activity towards formaldehyde, acetaldehyde, propionaldehyde, and benzaldehyde. In Pongo abelii (Sumatran orangutan), this protein is Cytosolic 10-formyltetrahydrofolate dehydrogenase.